A 500-amino-acid chain; its full sequence is TBC1 domain family member 10A (500 aa).

The span at 1–10 (MAKSSRENGP) shows a compositional bias: basic and acidic residues. Positions 1-45 (MAKSSRENGPREPAAGGSLSGTRESLAQGPDAATADELSSLGSDS) are disordered. 3 positions are modified to phosphoserine: Ser-39, Ser-40, and Ser-45. In terms of domain architecture, Rab-GAP TBC spans 111 to 299 (GIPPSLRGRA…RVWDMFFCEG (189 aa)). Disordered stretches follow at residues 396-415 (AEPG…LPPD) and 420-500 (SSKA…DTYL). At Ser-407 the chain carries Phosphoserine. Residues 438 to 453 (TSAQLDKSPGLSQATV) show a composition bias toward polar residues. At Thr-477 the chain carries Phosphothreonine. A binding to the PDZ domain of EBP50 region spans residues 497 to 500 (DTYL).

Binds to the first PDZ domain of NHERF1 and NHERF2. Expressed in most tissues, except for skeletal muscle.

It is found in the cell projection. It localises to the microvillus. GTPase-activating protein (GAP) specific for RAB27A and RAB35. Does not show GAP activity for RAB2A, RAB3A and RAB4A. In Mus musculus (Mouse), this protein is TBC1 domain family member 10A (Tbc1d10a).